A 765-amino-acid chain; its full sequence is Probable ATP-dependent RNA helicase DDX27 (765 aa).

Residues serine 23, serine 25, and serine 48 each carry the phosphoserine modification. Residues 43 to 63 (LGKNRSADFNPDFVFTEKEGT) are compositionally biased toward acidic residues. Disordered stretches follow at residues 43–83 (LGKN…KRAA) and 111–179 (KEKE…FFED). Residues 55–57 (FVF) carry the Required for interaction with the PEBOW complex motif. Residues 129–156 (ENDEEGSEDEASETDYSSADENILTKAD) show a composition bias toward basic and acidic residues. Serine 135 and serine 146 each carry phosphoserine. The span at 157 to 172 (TLKVKDRKKKKKKGQE) shows a compositional bias: acidic residues. The Nuclear localization signal signature appears at 164–169 (KKKKKK). The Q motif signature appears at 187–215 (LSFQDMNLSRPLLKAITAMGFKQPTPIQK). The region spanning 218–392 (IPVGLLGKDI…SVSLKNPVRI (175 aa)) is the Helicase ATP-binding domain. 231–238 (AATGTGKT) provides a ligand contact to ATP. Positions 340-343 (DEAD) match the DEAD box motif. Residues 426 to 572 (LLTRTFTDHV…DVILKFRDKI (147 aa)) enclose the Helicase C-terminal domain. A compositionally biased stretch (basic residues) spans 716–725 (VFDEELTNTS).

It belongs to the DEAD box helicase family. DDX27/DRS1 subfamily. In terms of assembly, associates with PeBoW complex, composed of BOP1, PES1 and WDR12. Interacts directly with BOP1 and PES1.

The protein resides in the nucleus. Its subcellular location is the nucleolus. It localises to the chromosome. It carries out the reaction ATP + H2O = ADP + phosphate + H(+). Probable ATP-dependent RNA helicase. Component of the nucleolar ribosomal RNA (rRNA) processing machinery that regulates 3' end formation of ribosomal 47S rRNA. This is Probable ATP-dependent RNA helicase DDX27 (DDX27) from Homo sapiens (Human).